Consider the following 173-residue polypeptide: Adenine phosphoribosyltransferase (173 aa).

This sequence belongs to the purine/pyrimidine phosphoribosyltransferase family. As to quaternary structure, homodimer.

The protein resides in the cytoplasm. The enzyme catalyses AMP + diphosphate = 5-phospho-alpha-D-ribose 1-diphosphate + adenine. Its pathway is purine metabolism; AMP biosynthesis via salvage pathway; AMP from adenine: step 1/1. Functionally, catalyzes a salvage reaction resulting in the formation of AMP, that is energically less costly than de novo synthesis. This is Adenine phosphoribosyltransferase from Chloroflexus aurantiacus (strain ATCC 29366 / DSM 635 / J-10-fl).